Reading from the N-terminus, the 177-residue chain is MQRRLVQQWSVAVFLLSYAVPSCGRSVEGLSRRLKRAVSEHQLLHDKGKSIQDLRRRFFLHHLIAEIHTAEIRATSEVSPNSKPSPNTKNHPVRFGSDDEGRYLTQETNKVETYKEQPLKTPGKKKKGKPGKRKEQEKKKRRTRSAWLDSGVTGSGLEGDHLSDTSTTSLELDSRRH.

The N-terminal stretch at 1–24 (MQRRLVQQWSVAVFLLSYAVPSCG) is a signal peptide. Positions 25–34 (RSVEGLSRRL) are excised as a propeptide. The tract at residues 57 to 68 (RFFLHHLIAEIH) is important for receptor binding. Positions 74-177 (ATSEVSPNSK…TSLELDSRRH (104 aa)) are disordered. The segment covering 76–90 (SEVSPNSKPSPNTKN) has biased composition (polar residues). Positions 108–129 (TNKVETYKEQPLKTPGKKKKGK) match the Nuclear localization signal motif. A compositionally biased stretch (basic and acidic residues) spans 109–118 (NKVETYKEQP). The segment covering 122–132 (PGKKKKGKPGK) has biased composition (basic residues).

The protein belongs to the parathyroid hormone family. Interacts with PTH1R (via N-terminal extracellular domain). In terms of processing, there are 3 principal secretory forms, called PTHrP[1-36], PTHrP[38-94], and osteostatin (PTHrP[107-139]) arising from endoproteolytic cleavage of the initial translation product. Each of these secretory forms is believed to have one or more of its own receptors that mediates the normal paracrine, autocrine and endocrine actions. As to expression, ubiquitous. Also expressed in the mammary gland.

Its subcellular location is the secreted. It localises to the cytoplasm. The protein localises to the nucleus. In terms of biological role, neuroendocrine peptide which is a critical regulator of cellular and organ growth, development, migration, differentiation and survival and of epithelial calcium ion transport. Acts by binding to its receptor, PTH1R, activating G protein-coupled receptor signaling. Regulates endochondral bone development and epithelial-mesenchymal interactions during the formation of the mammary glands and teeth. Required for skeletal homeostasis. Promotes mammary mesenchyme differentiation and bud outgrowth by modulating mesenchymal cell responsiveness to BMPs. Up-regulates BMPR1A expression in the mammary mesenchyme and this increases the sensitivity of these cells to BMPs and allows them to respond to BMP4 in a paracrine and/or autocrine fashion. BMP4 signaling in the mesenchyme, in turn, triggers epithelial outgrowth and augments MSX2 expression, which causes the mammary mesenchyme to inhibit hair follicle formation within the nipple sheath. Promotes colon cancer cell migration and invasion in an integrin alpha-6/beta-1-dependent manner through activation of Rac1. Its function is as follows. Potent inhibitor of osteoclastic bone resorption. In Homo sapiens (Human), this protein is Parathyroid hormone-related protein.